A 303-amino-acid polypeptide reads, in one-letter code: Mycothiol acetyltransferase (303 aa).

Aspartate 33 contacts 1D-myo-inositol 2-(L-cysteinylamino)-2-deoxy-alpha-D-glucopyranoside. Residues 78–80 and 86–91 contribute to the acetyl-CoA site; these read VVV and RRGTGS. The region spanning 150–303 is the N-acetyltransferase domain; that stretch reads VRFATYSGPH…AYAAVAPTDV (154 aa). 1D-myo-inositol 2-(L-cysteinylamino)-2-deoxy-alpha-D-glucopyranoside-binding residues include glutamate 177, lysine 218, and glutamate 226. 230–232 is an acetyl-CoA binding site; the sequence is VGV. 1D-myo-inositol 2-(L-cysteinylamino)-2-deoxy-alpha-D-glucopyranoside is bound at residue tyrosine 269. 274 to 279 serves as a coordination point for acetyl-CoA; sequence NTAAVK.

It belongs to the acetyltransferase family. MshD subfamily. As to quaternary structure, monomer.

It carries out the reaction 1D-myo-inositol 2-(L-cysteinylamino)-2-deoxy-alpha-D-glucopyranoside + acetyl-CoA = mycothiol + CoA + H(+). Functionally, catalyzes the transfer of acetyl from acetyl-CoA to desacetylmycothiol (Cys-GlcN-Ins) to form mycothiol. The polypeptide is Mycothiol acetyltransferase (Mycolicibacterium gilvum (strain PYR-GCK) (Mycobacterium gilvum (strain PYR-GCK))).